Here is a 379-residue protein sequence, read N- to C-terminus: Homoserine O-acetyltransferase (379 aa).

In terms of domain architecture, AB hydrolase-1 spans Asn-45–Glu-355. The active-site Nucleophile is the Ser-151. Residue Arg-220 coordinates substrate. Active-site residues include Asp-316 and His-349. Residue Asp-350 coordinates substrate.

The protein belongs to the AB hydrolase superfamily. MetX family. In terms of assembly, homodimer.

It is found in the cytoplasm. It carries out the reaction L-homoserine + acetyl-CoA = O-acetyl-L-homoserine + CoA. The protein operates within amino-acid biosynthesis; L-methionine biosynthesis via de novo pathway; O-acetyl-L-homoserine from L-homoserine: step 1/1. Its function is as follows. Transfers an acetyl group from acetyl-CoA to L-homoserine, forming acetyl-L-homoserine. The polypeptide is Homoserine O-acetyltransferase (Carboxydothermus hydrogenoformans (strain ATCC BAA-161 / DSM 6008 / Z-2901)).